The following is a 335-amino-acid chain: Ferrochelatase (335 aa).

Residues His-211 and Glu-290 each contribute to the Fe cation site.

It belongs to the ferrochelatase family.

The protein resides in the cytoplasm. It carries out the reaction heme b + 2 H(+) = protoporphyrin IX + Fe(2+). The protein operates within porphyrin-containing compound metabolism; protoheme biosynthesis; protoheme from protoporphyrin-IX: step 1/1. Its function is as follows. Catalyzes the ferrous insertion into protoporphyrin IX. The protein is Ferrochelatase of Sulfurihydrogenibium sp. (strain YO3AOP1).